Consider the following 94-residue polypeptide: Lipolysis-activating peptide 1-beta chain (94 aa).

Residues 1–19 (MKILAVVLISVIVLNTANG) form the signal peptide. Residues 20–87 (ENYYPQKYTN…YFNALESQCP (68 aa)) form the LCN-type CS-alpha/beta domain. Intrachain disulfides connect Cys34–Cys56, Cys42–Cys66, and Cys46–Cys68.

This sequence belongs to the long (3 C-C) scorpion toxin superfamily. As to quaternary structure, homodimer; disulfide-linked or monomer (edited version) or heterodimer of an alpha chain (AC P0CI44 or AC P0CI45) and this beta chain (non-edited version). In terms of tissue distribution, expressed by the venom gland.

The protein resides in the secreted. Its function is as follows. The homodimer inhibits HMG-CoA reductase (HMGCR) (32% of inhibition produced by 0.6 uM), a glycoprotein involved in the control of cholesterol biosynthesis. The inhibitory effects of bumarsin are seen at much lower concentrations (0.6 uM) than that for statins such as atorvastatin (5 mM) and simvastatin (10 uM). In addition to inhibition of HMG-CoA reductase, this protein lowers cholesterol levels by inducing steroid hormone synthesis via StAR, and by increasing reverse cholesterol transport mediated by the induction of ABCA1 and APOA1. Functionally, the heterodimer non-edited LVP1 induces lipolysis in rat adipocytes. Induction of lipolysis by LVP1 appears to be mediated through the beta-2 adrenergic receptor pathway (ADRB2). The monomer edited version, similar to alpha-toxins, may modulate voltage-gated sodium channels (Nav) and may block voltage-gated potassium channels (Kv). This chain is Lipolysis-activating peptide 1-beta chain, found in Lychas mucronatus (Chinese swimming scorpion).